A 453-amino-acid chain; its full sequence is Carbamoyl phosphate synthase arginine-specific small chain (453 aa).

The transit peptide at 1–28 (MFARVFKAMPARASALTSVNASIQARFM) directs the protein to the mitochondrion. Positions 219-406 (HVAVIDCGVK…IDSVKKYKAS (188 aa)) constitute a Glutamine amidotransferase type-1 domain. The active-site Nucleophile is C295. Residues H379 and E381 contribute to the active site.

The protein belongs to the CarA family. Heterodimer composed of 2 chains; the small (or glutamine) chain promotes the hydrolysis of glutamine to ammonia, which is used by the large (or ammonia) chain to synthesize carbamoyl phosphate.

The protein localises to the mitochondrion matrix. The catalysed reaction is hydrogencarbonate + L-glutamine + 2 ATP + H2O = carbamoyl phosphate + L-glutamate + 2 ADP + phosphate + 2 H(+). It catalyses the reaction L-glutamine + H2O = L-glutamate + NH4(+). It functions in the pathway amino-acid biosynthesis; L-arginine biosynthesis; carbamoyl phosphate from bicarbonate: step 1/1. Functionally, small subunit of the arginine-specific carbamoyl phosphate synthase (CPSase). CPSase catalyzes the formation of carbamoyl phosphate from the ammonia moiety of glutamine, carbonate, and phosphate donated by ATP, the first step of the arginine biosynthetic pathway. The small subunit (glutamine amidotransferase) binds and cleaves glutamine to supply the large subunit with the substrate ammonia. The protein is Carbamoyl phosphate synthase arginine-specific small chain (cpa1) of Neosartorya fischeri (strain ATCC 1020 / DSM 3700 / CBS 544.65 / FGSC A1164 / JCM 1740 / NRRL 181 / WB 181) (Aspergillus fischerianus).